The chain runs to 167 residues: Small ribosomal subunit protein uS5 (167 aa).

One can recognise an S5 DRBM domain in the interval 12–75; that stretch reads LEDQVVSINR…DAAKKSLIEV (64 aa).

This sequence belongs to the universal ribosomal protein uS5 family. Part of the 30S ribosomal subunit. Contacts proteins S4 and S8.

In terms of biological role, with S4 and S12 plays an important role in translational accuracy. Its function is as follows. Located at the back of the 30S subunit body where it stabilizes the conformation of the head with respect to the body. This chain is Small ribosomal subunit protein uS5, found in Lacticaseibacillus paracasei (strain ATCC 334 / BCRC 17002 / CCUG 31169 / CIP 107868 / KCTC 3260 / NRRL B-441) (Lactobacillus paracasei).